Here is a 549-residue protein sequence, read N- to C-terminus: Glucose-6-phosphate isomerase (549 aa).

E355 functions as the Proton donor in the catalytic mechanism. Active-site residues include H386 and K514.

Belongs to the GPI family.

Its subcellular location is the cytoplasm. The catalysed reaction is alpha-D-glucose 6-phosphate = beta-D-fructose 6-phosphate. It functions in the pathway carbohydrate biosynthesis; gluconeogenesis. Its pathway is carbohydrate degradation; glycolysis; D-glyceraldehyde 3-phosphate and glycerone phosphate from D-glucose: step 2/4. In terms of biological role, catalyzes the reversible isomerization of glucose-6-phosphate to fructose-6-phosphate. This Salmonella paratyphi B (strain ATCC BAA-1250 / SPB7) protein is Glucose-6-phosphate isomerase.